A 1070-amino-acid chain; its full sequence is DNA-directed RNA polymerase subunit beta (1070 aa).

The protein belongs to the RNA polymerase beta chain family. In plastids the minimal PEP RNA polymerase catalytic core is composed of four subunits: alpha, beta, beta', and beta''. When a (nuclear-encoded) sigma factor is associated with the core the holoenzyme is formed, which can initiate transcription.

It localises to the plastid. Its subcellular location is the chloroplast. The catalysed reaction is RNA(n) + a ribonucleoside 5'-triphosphate = RNA(n+1) + diphosphate. Functionally, DNA-dependent RNA polymerase catalyzes the transcription of DNA into RNA using the four ribonucleoside triphosphates as substrates. The polypeptide is DNA-directed RNA polymerase subunit beta (Chaetosphaeridium globosum (Charophycean green alga)).